Here is a 128-residue protein sequence, read N- to C-terminus: Glycine cleavage system H protein (128 aa).

Residues 24 to 106 (VFCVGITDHA…YDEGWLFRIR (83 aa)) enclose the Lipoyl-binding domain. At K65 the chain carries N6-lipoyllysine.

Belongs to the GcvH family. The glycine cleavage system is composed of four proteins: P, T, L and H. Requires (R)-lipoate as cofactor.

Functionally, the glycine cleavage system catalyzes the degradation of glycine. The H protein shuttles the methylamine group of glycine from the P protein to the T protein. This is Glycine cleavage system H protein from Edwardsiella ictaluri (strain 93-146).